Consider the following 1485-residue polypeptide: DNA topoisomerase 2 (1485 aa).

Acidic residues predominate over residues 1–16 (MSIDADFSDYEDEASG). The disordered stretch occupies residues 1-76 (MSIDADFSDY…NGNGNSNVST (76 aa)). Polar residues predominate over residues 46 to 59 (DLRQTSLTSMTASE). Low complexity predominate over residues 64-76 (VTNNGNGNSNVST). ATP is bound by residues N136, N165, 193–195 (SSN), and 206–213 (GRNGYGAK). An interaction with DNA region spans residues 388-392 (KKENK). 421–423 (QTK) provides a ligand contact to ATP. The region spanning 499 to 613 (CVLILTEGDS…SLLQIPGFLI (115 aa)) is the Toprim domain. 3 residues coordinate Mg(2+): E505, D582, and D584. One can recognise a Topo IIA-type catalytic domain in the interval 745-1195 (IPSVVDGLKP…TPKELWLHDL (451 aa)). The O-(5'-phospho-DNA)-tyrosine intermediate role is filled by Y835. The tract at residues 1019 to 1028 (KLSRTQATSN) is interaction with DNA. Residues 1216 to 1225 (EEQSSRDFVN) show a composition bias toward basic and acidic residues. The interval 1216-1485 (EEQSSRDFVN…EDVDDYDESD (270 aa)) is disordered. Residues 1226–1242 (RTKKKPRGKSTGTRKPR) show a composition bias toward basic residues. Over residues 1260–1273 (ESKPSTTNRKQQTL) the composition is skewed to polar residues. Residues 1278–1307 (ASKEPEKSSDINIVKTEDNSHGLSVEENRI) are compositionally biased toward basic and acidic residues. Phosphoserine is present on residues S1310 and S1345. Basic residues predominate over residues 1387 to 1396 (AKNKGKKASS). A compositionally biased stretch (polar residues) spans 1413-1425 (GSSSTPKASSTNA). At S1433 the chain carries Phosphoserine. Over residues 1473-1485 (DNDEDVDDYDESD) the composition is skewed to acidic residues.

The protein belongs to the type II topoisomerase family. Homodimer. It depends on Mg(2+) as a cofactor. The cofactor is Mn(2+). Ca(2+) serves as cofactor. Post-translationally, phosphorylated at multiple sites at both extremities of the protein.

It localises to the nucleus. It carries out the reaction ATP-dependent breakage, passage and rejoining of double-stranded DNA.. Functionally, control of topological states of DNA by transient breakage and subsequent rejoining of DNA strands. Topoisomerase II makes double-strand breaks. The chain is DNA topoisomerase 2 (top2) from Schizosaccharomyces pombe (strain 972 / ATCC 24843) (Fission yeast).